We begin with the raw amino-acid sequence, 519 residues long: Histidine ammonia-lyase (519 aa).

The 5-imidazolinone (Ala-Gly) cross-link spans 146–148; that stretch reads ASG. Ser147 is subject to 2,3-didehydroalanine (Ser).

This sequence belongs to the PAL/histidase family. Post-translationally, contains an active site 4-methylidene-imidazol-5-one (MIO), which is formed autocatalytically by cyclization and dehydration of residues Ala-Ser-Gly.

It is found in the cytoplasm. The enzyme catalyses L-histidine = trans-urocanate + NH4(+). It participates in amino-acid degradation; L-histidine degradation into L-glutamate; N-formimidoyl-L-glutamate from L-histidine: step 1/3. This Bradyrhizobium diazoefficiens (strain JCM 10833 / BCRC 13528 / IAM 13628 / NBRC 14792 / USDA 110) protein is Histidine ammonia-lyase.